We begin with the raw amino-acid sequence, 149 residues long: SsrA-binding protein (149 aa).

The disordered stretch occupies residues 121-149 (GKKQHDKRADELDKDSKREAQRAMKERQR). Residues 127-149 (KRADELDKDSKREAQRAMKERQR) show a composition bias toward basic and acidic residues.

Belongs to the SmpB family.

The protein localises to the cytoplasm. Functionally, required for rescue of stalled ribosomes mediated by trans-translation. Binds to transfer-messenger RNA (tmRNA), required for stable association of tmRNA with ribosomes. tmRNA and SmpB together mimic tRNA shape, replacing the anticodon stem-loop with SmpB. tmRNA is encoded by the ssrA gene; the 2 termini fold to resemble tRNA(Ala) and it encodes a 'tag peptide', a short internal open reading frame. During trans-translation Ala-aminoacylated tmRNA acts like a tRNA, entering the A-site of stalled ribosomes, displacing the stalled mRNA. The ribosome then switches to translate the ORF on the tmRNA; the nascent peptide is terminated with the 'tag peptide' encoded by the tmRNA and targeted for degradation. The ribosome is freed to recommence translation, which seems to be the essential function of trans-translation. The chain is SsrA-binding protein from Dechloromonas aromatica (strain RCB).